Consider the following 211-residue polypeptide: Minor capsid protein VP2 (211 aa).

This sequence belongs to the norovirus VP2 family. As to quaternary structure, homooligomer. The portal-like structure consists in 12 copies of VP2. Interacts with capsid protein VP1.

It localises to the virion. It is found in the host cytoplasm. Its function is as follows. Minor structural protein that forms a portal-like structure at a unique three-fold axis of symmetry, following binding to the host receptor. The channel formed by VP2 may allow the delivery of the viral genome through the host endosomal membrane. In Homo sapiens (Human), this protein is Minor capsid protein VP2.